Consider the following 381-residue polypeptide: MKLLARTLYLWEVGRQVASWSLTSGQECLVLRETWWASMRAVRTRAVHHKPGHCIAMGRIMRPDDANVAGNVHGGTILKMIEEAGVIISTRHCNSQNGERCVAALARVERTDFLSPMCIGEVAHVSAEITYTSKHSVEVQVHVLSENILTGTKKLTNKATLWYVPLSLKNVDKVLEVPPIVYLRQEQEEEGRKRYEAQKLERMETKWRNGDIVQPILNPEPNTVSYSQSSLIHLVGPSDCTLHGFVHGGVTMKLMDEVAGIVAARHCKTNIVTASVDAINFHDKIRKGCVITISGRMTFTSNKSMEIEVLVDADPVVDNSQKRYRAASAFFTYVSLNQEGKPLPVPQLVPETEDEKKRFEEGKGRYLQMKAKRQGHTEPQP.

Positions 51 to 169 (PGHCIAMGRI…TLWYVPLSLK (119 aa)) constitute a HotDog ACOT-type 1 domain. The active site involves Asn67. An N6-acetyllysine mark is found at Lys169 and Lys199. Residues 225–339 (SYSQSSLIHL…FFTYVSLNQE (115 aa)) enclose the HotDog ACOT-type 2 domain. The active site involves Asp256. Lys284 bears the N6-acetyllysine mark. The tract at residues 343–381 (LPVPQLVPETEDEKKRFEEGKGRYLQMKAKRQGHTEPQP) is disordered. Basic and acidic residues predominate over residues 354–364 (DEKKRFEEGKG).

As to quaternary structure, homohexamer. In terms of processing, the N-terminus is blocked. Isoform 1 is expressed constitutively in brain and testis. Isoform 2 is induced in liver by treatment with the peroxisome proliferator.

Its subcellular location is the cytoplasm. The protein localises to the cytosol. The enzyme catalyses hexadecanoyl-CoA + H2O = hexadecanoate + CoA + H(+). It catalyses the reaction dodecanoyl-CoA + H2O = dodecanoate + CoA + H(+). It carries out the reaction tetradecanoyl-CoA + H2O = tetradecanoate + CoA + H(+). The catalysed reaction is decanoyl-CoA + H2O = decanoate + CoA + H(+). The enzyme catalyses octanoyl-CoA + H2O = octanoate + CoA + H(+). It catalyses the reaction octadecanoyl-CoA + H2O = octadecanoate + CoA + H(+). It carries out the reaction (9Z)-octadecenoyl-CoA + H2O = (9Z)-octadecenoate + CoA + H(+). The protein operates within lipid metabolism; fatty acid metabolism. In terms of biological role, catalyzes the hydrolysis of acyl-CoAs into free fatty acids and coenzyme A (CoASH), regulating their respective intracellular levels. Preferentially hydrolyzes palmitoyl-CoA, but has a broad specificity acting on other fatty acyl-CoAs with chain-lengths of C8-C18. May play an important physiological function in brain. This Rattus norvegicus (Rat) protein is Cytosolic acyl coenzyme A thioester hydrolase (Acot7).